We begin with the raw amino-acid sequence, 594 residues long: Lipolysis-stimulated lipoprotein receptor (594 aa).

A signal peptide spans 1 to 35 (MAPAASACAGAPGSHPATTIFVCLFLIIYCPDRAS). Residues 36-206 (AIQVTVPDPY…PGFRAGPLED (171 aa)) are Extracellular-facing. In terms of domain architecture, Ig-like V-type spans 89 to 181 (PASVDNQLNA…DLDGNNEAYA (93 aa)). Residues C113 and C165 are joined by a disulfide bond. A helical membrane pass occupies residues 207–227 (WLFVVVVCLASLLFFLLLGIC). The Cytoplasmic segment spans residues 228–594 (WCQCCPHTCC…LALSRESLVV (367 aa)). Position 283 is a phosphothreonine (T283). At S308 the chain carries Phosphoserine; by MAPK8 and MAPK9. Phosphoserine occurs at positions 314, 332, 375, and 379. Basic and acidic residues predominate over residues 375-387 (SEVTSLHEDDWRS). Residues 375-594 (SEVTSLHEDD…LALSRESLVV (220 aa)) form a disordered region. Position 396 is a phosphothreonine (T396). A phosphoserine mark is found at S407, S410, and S436. Over residues 435 to 444 (RSVDALDDIN) the composition is skewed to basic and acidic residues. Positions 445–460 (RPGSTESGRSSPPSSG) are enriched in low complexity. Residues S471 and S473 each carry the phosphoserine modification. A compositionally biased stretch (basic and acidic residues) spans 472-550 (RSRDDLYDPD…GAGERRRVYR (79 aa)). Y478 carries the phosphotyrosine modification. The residue at position 576 (S576) is a Phosphoserine. K583 participates in a covalent cross-link: Glycyl lysine isopeptide (Lys-Gly) (interchain with G-Cter in ubiquitin). 2 positions are modified to phosphoserine: S588 and S591.

This sequence belongs to the immunoglobulin superfamily. LISCH7 family. In terms of assembly, homotrimer or homotetramer. Assembles into cell-cell contacts. Interacts (via the cytoplasmic domain) with MARVELD2 (via C-terminal cytoplasmic domain); the interaction is required to recruit MARVELD2 to tricellular contacts. Interacts with OCLN. Phosphorylation at Ser-308 by MAPK8/JNK1 and MAPK9/JNK2 may be required for exclusive localization at tricellular tight junstions. Post-translationally, polyubiquitinated at Lys-583 via 'Lys-63'-linked ubiquitin chains; deubiquitinated by USP53. Expressed in epithelial tissues (at protein level). Specifically expressed in liver and to a lower extent in kidney (at protein level). Also detected in brain, testis, ovaries, adrenal gland, intestine, muscle, and lung. In colon, only expressed in the lower portion of crypts. Expressed in the liver. As to expression, expressed in liver, stomach, small intestine and colon. Also detected in other epithelial tissues.

Its subcellular location is the cell membrane. It is found in the cell junction. The protein localises to the tight junction. Its function is as follows. Probable role in the clearance of triglyceride-rich lipoprotein from blood. Binds chylomicrons, LDL and VLDL in presence of free fatty acids and allows their subsequent uptake in the cells. Maintains epithelial barrier function by recruiting MARVELD2/tricellulin to tricellular tight junctions. The chain is Lipolysis-stimulated lipoprotein receptor from Mus musculus (Mouse).